The primary structure comprises 37 residues: Omega-agatoxin-Aa3d (37 aa).

This sequence belongs to the neurotoxin 04 (omega-agtx) family. 03 (type II/III omega-agtx) subfamily. Post-translationally, disulfide bonds are present. Expressed by the venom gland.

It is found in the secreted. Its function is as follows. Omega-agatoxins are antagonists of voltage-gated calcium channels. This toxin blocks calcium channels in insect central neurons but not at peripheral neuromuscular junctions. In vertebrates, it is broadly active against all high-threshold Cav1/CACNA1 channels and Cav2.2/CACNA1B channels. In Agelenopsis aperta (North American funnel-web spider), this protein is Omega-agatoxin-Aa3d.